The sequence spans 545 residues: Chaperonin GroEL 3 (545 aa).

ATP is bound by residues 29–32 (TLGP), 86–90 (DGTTT), G413, 479–481 (DAV), and D495. The disordered stretch occupies residues 526 to 545 (DKQAKAPAGVGPGPGEGFDY). Gly residues predominate over residues 535–545 (VGPGPGEGFDY).

It belongs to the chaperonin (HSP60) family. In terms of assembly, forms a cylinder of 14 subunits composed of two heptameric rings stacked back-to-back. Interacts with the co-chaperonin GroES.

It is found in the cytoplasm. It carries out the reaction ATP + H2O + a folded polypeptide = ADP + phosphate + an unfolded polypeptide.. Together with its co-chaperonin GroES, plays an essential role in assisting protein folding. The GroEL-GroES system forms a nano-cage that allows encapsulation of the non-native substrate proteins and provides a physical environment optimized to promote and accelerate protein folding. This Trichormus variabilis (strain ATCC 29413 / PCC 7937) (Anabaena variabilis) protein is Chaperonin GroEL 3.